The primary structure comprises 147 residues: Large ribosomal subunit protein uL15 (147 aa).

The tract at residues 16 to 63 (SSRARVGRGIGSGLGKTAGRGHKGSFARKGGGKIKPGFEGGQTPMQRR) is disordered. Residues 23 to 33 (RGIGSGLGKTA) show a composition bias toward gly residues. Residues 34–47 (GRGHKGSFARKGGG) show a composition bias toward basic residues.

The protein belongs to the universal ribosomal protein uL15 family. In terms of assembly, part of the 50S ribosomal subunit.

Binds to the 23S rRNA. In Xylella fastidiosa (strain Temecula1 / ATCC 700964), this protein is Large ribosomal subunit protein uL15.